A 215-amino-acid chain; its full sequence is 16S rRNA (adenine(1408)-N(1))-methyltransferase (215 aa).

S-adenosyl-L-methionine is bound by residues Gly32, Asp55, 87 to 88 (AE), 102 to 107 (LMPWGS), and 191 to 193 (TSW).

The protein belongs to the methyltransferase superfamily. Kanamycin-apramycin resistance family.

The catalysed reaction is adenosine(1408) in 16S rRNA + S-adenosyl-L-methionine = N(1)-methyladenosine(1408) in 16S rRNA + S-adenosyl-L-homocysteine + H(+). In terms of biological role, specifically methylates the N(1) position of adenine 1408 in 16S rRNA. Confers resistance to various aminoglycosides. The protein is 16S rRNA (adenine(1408)-N(1))-methyltransferase (kamB) of Streptoalloteichus hindustanus.